Here is a 375-residue protein sequence, read N- to C-terminus: Chaperone protein DnaJ (375 aa).

The J domain occupies 4–69 (DLYETLGVQK…QKRAAYDRYG (66 aa)). The CR-type zinc-finger motif lies at 133–211 (GKTAQIRVPT…CHGQGRVVEE (79 aa)). C146, C149, C163, C166, C185, C188, C199, and C202 together coordinate Zn(2+). 4 CXXCXGXG motif repeats span residues 146–153 (CDVCTGTG), 163–170 (CGTCQGTG), 185–192 (CPTCGGRG), and 199–206 (CTKCHGQG).

This sequence belongs to the DnaJ family. Homodimer. Zn(2+) is required as a cofactor.

It is found in the cytoplasm. Its function is as follows. Participates actively in the response to hyperosmotic and heat shock by preventing the aggregation of stress-denatured proteins and by disaggregating proteins, also in an autonomous, DnaK-independent fashion. Unfolded proteins bind initially to DnaJ; upon interaction with the DnaJ-bound protein, DnaK hydrolyzes its bound ATP, resulting in the formation of a stable complex. GrpE releases ADP from DnaK; ATP binding to DnaK triggers the release of the substrate protein, thus completing the reaction cycle. Several rounds of ATP-dependent interactions between DnaJ, DnaK and GrpE are required for fully efficient folding. Also involved, together with DnaK and GrpE, in the DNA replication of plasmids through activation of initiation proteins. The protein is Chaperone protein DnaJ of Sinorhizobium medicae (strain WSM419) (Ensifer medicae).